The primary structure comprises 292 residues: Elongation factor Ts (292 aa).

Residues 79–82 (TDFV) are involved in Mg(2+) ion dislocation from EF-Tu.

This sequence belongs to the EF-Ts family.

Its subcellular location is the cytoplasm. In terms of biological role, associates with the EF-Tu.GDP complex and induces the exchange of GDP to GTP. It remains bound to the aminoacyl-tRNA.EF-Tu.GTP complex up to the GTP hydrolysis stage on the ribosome. The sequence is that of Elongation factor Ts from Xanthomonas axonopodis pv. citri (strain 306).